Here is a 663-residue protein sequence, read N- to C-terminus: MNKQNNYSDDSIQVLEGLEAVRKRPGMYIGSTDKRGLHHLVYEIVDNSVDEVLNGYGNEIDVTINKDGSISIEDNGRGMPTGIHKSGKPTVEVIFTVLHAGGKFGQGGYKTSGGLHGVGASVVNALSEWLEVEIHRDGNIYHQSFKNGGSPSSGLVKKGKTKKTGTKVTFKPDDTIFKASTSFNFDVLSERLQESAFLLKNLKITLNDLRSGKERQEHYHYEEGIKEFVSYVNEGKEVLHDVATFSGEANGIEVDVAFQYNDQYSESILSFVNNVRTKDGGTHEVGFKTAMTRVFNDYARRINELKTKDKNLDGNDIREGLTAVVSVRIPEELLQFEGQTKSKLGTSEARSAVDSVVADKLPFYLEEKGQLSKSLVKKAIKAQQAREAARKAREDARSGKKNKRKDTLLSGKLTPAQSKNTEKNELYLVEGDSAGGSAKLGRDRKFQAILPLRGKVINTEKARLEDIFKNEEINTIIHTIGAGVGTDFKIEDSNYNRVIIMTDADTDGAHIQVLLLTFFFKYMKPLVQADRVFIALPPLYKLEKGKGKTKRVEYAWTDEELNKLQKELGKGFTLQRYKGLGEMNPEQLWETTMNPETRTLIRVQVEDEVRSSKRVTTLMGDKVQPRREWIEKHVEFGMQEDQSILDNSEVQVLENDQFDEEEI.

ATP is bound by residues tyrosine 7, asparagine 47, aspartate 74, 114–120 (GLHGVGA), and lysine 341. The segment at 386–416 (REAARKAREDARSGKKNKRKDTLLSGKLTPA) is disordered. The span at 387–398 (EAARKAREDARS) shows a compositional bias: basic and acidic residues. One can recognise a Toprim domain in the interval 424-538 (NELYLVEGDS…ADRVFIALPP (115 aa)). Mg(2+)-binding residues include glutamate 430, aspartate 503, and aspartate 505.

The protein belongs to the type II topoisomerase family. ParE type 2 subfamily. Heterotetramer composed of ParC and ParE. The cofactor is Mg(2+). Mn(2+) is required as a cofactor. Ca(2+) serves as cofactor.

The enzyme catalyses ATP-dependent breakage, passage and rejoining of double-stranded DNA.. Functionally, topoisomerase IV is essential for chromosome segregation. It relaxes supercoiled DNA. Performs the decatenation events required during the replication of a circular DNA molecule. This chain is DNA topoisomerase 4 subunit B, found in Staphylococcus aureus (strain MSSA476).